The following is a 975-amino-acid chain: Glycine dehydrogenase (decarboxylating) (975 aa).

An N6-(pyridoxal phosphate)lysine modification is found at K723.

The protein belongs to the GcvP family. The glycine cleavage system is composed of four proteins: P, T, L and H. Pyridoxal 5'-phosphate serves as cofactor.

It catalyses the reaction N(6)-[(R)-lipoyl]-L-lysyl-[glycine-cleavage complex H protein] + glycine + H(+) = N(6)-[(R)-S(8)-aminomethyldihydrolipoyl]-L-lysyl-[glycine-cleavage complex H protein] + CO2. In terms of biological role, the glycine cleavage system catalyzes the degradation of glycine. The P protein binds the alpha-amino group of glycine through its pyridoxal phosphate cofactor; CO(2) is released and the remaining methylamine moiety is then transferred to the lipoamide cofactor of the H protein. This chain is Glycine dehydrogenase (decarboxylating), found in Burkholderia vietnamiensis (strain G4 / LMG 22486) (Burkholderia cepacia (strain R1808)).